The chain runs to 153 residues: Fucose mutarotase (153 aa).

His-24 acts as the Proton donor in catalysis. Substrate is bound at residue Asp-32. Asp-69 is a catalytic residue. 4 residues coordinate substrate: Met-78, Tyr-119, Tyr-137, and Asn-139. The active site involves Tyr-119.

Belongs to the RbsD / FucU family.

It catalyses the reaction alpha-L-fucose = beta-L-fucose. In terms of biological role, involved in the interconversion between alpha- and beta-L-fucoses. In Danio rerio (Zebrafish), this protein is Fucose mutarotase (fuom).